Reading from the N-terminus, the 731-residue chain is DNA topoisomerase 1 (731 aa).

The Toprim domain occupies 17-130; it reads KHLVIVESPA…KRIVFNEITP (114 aa). Mg(2+)-binding residues include Glu23 and Asp96. A Topo IA-type catalytic domain is found at 144–569; it reads DTAKVNAQKA…DFYPAFSEKV (426 aa). The interaction with DNA stretch occupies residues 178–183; the sequence is SAGRVQ. Tyr312 serves as the catalytic O-(5'-phospho-DNA)-tyrosine intermediate. 3 C4-type zinc fingers span residues 591 to 617, 628 to 657, and 670 to 696; these read CSQC…FPEC, CPRP…FPVC, and CPQC…NPEC.

Belongs to the type IA topoisomerase family. In terms of assembly, monomer. The cofactor is Mg(2+).

It carries out the reaction ATP-independent breakage of single-stranded DNA, followed by passage and rejoining.. Releases the supercoiling and torsional tension of DNA, which is introduced during the DNA replication and transcription, by transiently cleaving and rejoining one strand of the DNA duplex. Introduces a single-strand break via transesterification at a target site in duplex DNA. The scissile phosphodiester is attacked by the catalytic tyrosine of the enzyme, resulting in the formation of a DNA-(5'-phosphotyrosyl)-enzyme intermediate and the expulsion of a 3'-OH DNA strand. The free DNA strand then undergoes passage around the unbroken strand, thus removing DNA supercoils. Finally, in the religation step, the DNA 3'-OH attacks the covalent intermediate to expel the active-site tyrosine and restore the DNA phosphodiester backbone. In Treponema pallidum (strain Nichols), this protein is DNA topoisomerase 1.